The chain runs to 117 residues: MSMRANRVGEQMKKELGDIISRKLKDPRIGFLTVTDVRVSGDLQIAKVYISVLGDEKKREEALKGLAKAKGFIRSEIGSRIRLRKTPEIEFEFDESIDYGNRIETLIHELHSEKPSE.

The protein belongs to the RbfA family. Monomer. Binds 30S ribosomal subunits, but not 50S ribosomal subunits or 70S ribosomes.

It is found in the cytoplasm. Its function is as follows. One of several proteins that assist in the late maturation steps of the functional core of the 30S ribosomal subunit. Associates with free 30S ribosomal subunits (but not with 30S subunits that are part of 70S ribosomes or polysomes). Required for efficient processing of 16S rRNA. May interact with the 5'-terminal helix region of 16S rRNA. This Bacillus subtilis (strain 168) protein is Ribosome-binding factor A.